The chain runs to 118 residues: Large ribosomal subunit protein uL22 (118 aa).

It belongs to the universal ribosomal protein uL22 family. In terms of assembly, part of the 50S ribosomal subunit.

Its function is as follows. This protein binds specifically to 23S rRNA; its binding is stimulated by other ribosomal proteins, e.g. L4, L17, and L20. It is important during the early stages of 50S assembly. It makes multiple contacts with different domains of the 23S rRNA in the assembled 50S subunit and ribosome. In terms of biological role, the globular domain of the protein is located near the polypeptide exit tunnel on the outside of the subunit, while an extended beta-hairpin is found that lines the wall of the exit tunnel in the center of the 70S ribosome. This is Large ribosomal subunit protein uL22 from Levilactobacillus brevis (strain ATCC 367 / BCRC 12310 / CIP 105137 / JCM 1170 / LMG 11437 / NCIMB 947 / NCTC 947) (Lactobacillus brevis).